The following is a 422-amino-acid chain: Glutamate 2,3-aminomutase (422 aa).

The Radical SAM core domain maps to 150–371; it reads RRYPDRLIIN…AIPTYIVNAP (222 aa). C164, C168, and C171 together coordinate [4Fe-4S] cluster. At K376 the chain carries N6-(pyridoxal phosphate)lysine.

This sequence belongs to the radical SAM superfamily. Pyridoxal 5'-phosphate serves as cofactor. It depends on [4Fe-4S] cluster as a cofactor.

It catalyses the reaction L-glutamate = 3-aminopentanedioate. Functionally, catalyzes the interconversion of L-glutamate and L-beta-glutamate. Does not have L-lysine 2,3-aminomutase activity. This is Glutamate 2,3-aminomutase (eam) from Clostridioides difficile (strain 630) (Peptoclostridium difficile).